The sequence spans 326 residues: Protein spaetzle (326 aa).

Positions 1–25 (MMTPMWISLFKVLLLLFAFFATYEA) are cleaved as a signal peptide. A glycan (N-linked (GlcNAc...) asparagine) is linked at Asn48. A disordered region spans residues 56 to 82 (FMPIPTQHDDPTQKQKQNQNQSPIPET). A compositionally biased stretch (polar residues) spans 69 to 80 (KQKQNQNQSPIP). N-linked (GlcNAc...) asparagine glycans are attached at residues Asn114 and Asn164. The tract at residues 152 to 174 (YRPPQSPARPLRNDTKEHNPCAK) is disordered. The segment covering 162–174 (LRNDTKEHNPCAK) has biased composition (basic and acidic residues). The Spaetzle domain maps to 228-322 (FLCRSIRKLV…FKIPSCCKCA (95 aa)). 3 disulfides stabilise this stretch: Cys230-Cys288, Cys267-Cys319, and Cys274-Cys321.

Homodimer; disulfide-linked. In the presence of Tl, crystal structures show one Tl molecule bound to a spaetzle C-106 homodimer. However, the active complex probably consists of two Tl molecules bound to a spaetzle C-106 homodimer. This is supported by in vitro experiments which also show binding of the spaetzle C-106 dimer to 2 Tl receptors. Ligand binding induces conformational changes in the extracellular domain of Tl. This may enable a secondary homodimerization interface at the C-terminus of the Tl extracellular domain. During embryonic development proteolytically processed by activated ea/easter; ea cleaves the signal peptide and also generates the C-terminal 12 kDa active ligand for the Toll receptor, C-106 (except for isoform 8.24 and isoform 11.27 as they do not contain the cleavage site). During the immune response, cleaved in the same manner by SPE. Post-translationally, extracellular forms of isoform 8.19 and isoform 11.7 are glycosylated.

The protein resides in the secreted. The activated form, spaetzle C-106, acts as a ligand for the Toll receptor. Binding to Toll activates the Toll signaling pathway and induces expression of the antifungal peptide drosomycin. Component of the extracellular signaling pathway that establishes dorsal-ventral polarity in the embryo. This Drosophila melanogaster (Fruit fly) protein is Protein spaetzle.